The sequence spans 37 residues: Large ribosomal subunit protein bL36 (37 aa).

Belongs to the bacterial ribosomal protein bL36 family.

This Staphylococcus saprophyticus subsp. saprophyticus (strain ATCC 15305 / DSM 20229 / NCIMB 8711 / NCTC 7292 / S-41) protein is Large ribosomal subunit protein bL36.